Here is a 321-residue protein sequence, read N- to C-terminus: Biotin synthase (321 aa).

Positions 45-271 (FFGKKVKLNM…INPSKEIRIA (227 aa)) constitute a Radical SAM core domain. Positions 63, 67, and 70 each coordinate [4Fe-4S] cluster. Residues cysteine 106, cysteine 139, cysteine 199, and arginine 269 each coordinate [2Fe-2S] cluster.

The protein belongs to the radical SAM superfamily. Biotin synthase family. In terms of assembly, homodimer. Requires [4Fe-4S] cluster as cofactor. [2Fe-2S] cluster serves as cofactor.

It catalyses the reaction (4R,5S)-dethiobiotin + (sulfur carrier)-SH + 2 reduced [2Fe-2S]-[ferredoxin] + 2 S-adenosyl-L-methionine = (sulfur carrier)-H + biotin + 2 5'-deoxyadenosine + 2 L-methionine + 2 oxidized [2Fe-2S]-[ferredoxin]. The protein operates within cofactor biosynthesis; biotin biosynthesis; biotin from 7,8-diaminononanoate: step 2/2. Its function is as follows. Catalyzes the conversion of dethiobiotin (DTB) to biotin by the insertion of a sulfur atom into dethiobiotin via a radical-based mechanism. This Staphylococcus haemolyticus (strain JCSC1435) protein is Biotin synthase.